A 251-amino-acid polypeptide reads, in one-letter code: Ubiquinone/menaquinone biosynthesis C-methyltransferase UbiE (251 aa).

S-adenosyl-L-methionine-binding positions include threonine 74, aspartate 95, and 123-124 (NA).

Belongs to the class I-like SAM-binding methyltransferase superfamily. MenG/UbiE family.

The catalysed reaction is a 2-demethylmenaquinol + S-adenosyl-L-methionine = a menaquinol + S-adenosyl-L-homocysteine + H(+). It carries out the reaction a 2-methoxy-6-(all-trans-polyprenyl)benzene-1,4-diol + S-adenosyl-L-methionine = a 5-methoxy-2-methyl-3-(all-trans-polyprenyl)benzene-1,4-diol + S-adenosyl-L-homocysteine + H(+). Its pathway is quinol/quinone metabolism; menaquinone biosynthesis; menaquinol from 1,4-dihydroxy-2-naphthoate: step 2/2. It participates in cofactor biosynthesis; ubiquinone biosynthesis. Its function is as follows. Methyltransferase required for the conversion of demethylmenaquinol (DMKH2) to menaquinol (MKH2) and the conversion of 2-polyprenyl-6-methoxy-1,4-benzoquinol (DDMQH2) to 2-polyprenyl-3-methyl-6-methoxy-1,4-benzoquinol (DMQH2). The chain is Ubiquinone/menaquinone biosynthesis C-methyltransferase UbiE from Erwinia tasmaniensis (strain DSM 17950 / CFBP 7177 / CIP 109463 / NCPPB 4357 / Et1/99).